The chain runs to 583 residues: Pentatricopeptide repeat-containing protein At3g59040 (583 aa).

PPR repeat units follow at residues 138–172 (SEID…GSTP), 173–207 (NVIS…GPEP), 208–242 (SAIT…KKSP), 246–280 (DQKM…GVPQ), 281–312 (STVT…DIQP), 313–347 (DVVS…GVRP), 348–382 (THKA…RIFP), 383–417 (DLWS…GFEP), 418–452 (NIVT…GIKA), and 453–487 (NQTI…GVPP). The segment at 525–583 (VYGSDDDEEGVEDISSESSDDEDEGDDDDDDARETVLYDKPQEGSLGYGSLQTEELVGL) is disordered. The segment covering 528–556 (SDDDEEGVEDISSESSDDEDEGDDDDDDA) has biased composition (acidic residues). Over residues 557–566 (RETVLYDKPQ) the composition is skewed to basic and acidic residues.

It belongs to the PPR family. P subfamily.

The chain is Pentatricopeptide repeat-containing protein At3g59040 from Arabidopsis thaliana (Mouse-ear cress).